Reading from the N-terminus, the 395-residue chain is Flap endonuclease 1 (395 aa).

The interval 1–104 (MGIKHLYQII…GELAKRIARK (104 aa)) is N-domain. Asp-34 serves as a coordination point for Mg(2+). Arg-47 and Arg-70 together coordinate DNA. Mg(2+) is bound at residue Asp-86. The interval 103-123 (RKQEAAEQHEEAKETGTTEDV) is disordered. The interval 122–253 (DVEKFSRRTV…NTALKLIRDH (132 aa)) is I-domain. Mg(2+) is bound by residues Glu-158, Glu-160, Asp-179, and Asp-181. Glu-158 lines the DNA pocket. Gly-231 and Asp-233 together coordinate DNA. Asp-233 contributes to the Mg(2+) binding site. The tract at residues 341-349 (QQSRLEGFF) is interaction with PCNA. Residues 356–389 (DEEKASLKRKHEEKLEAAKKKKKEDAKAKREAKS) are compositionally biased toward basic and acidic residues. Residues 356–395 (DEEKASLKRKHEEKLEAAKKKKKEDAKAKREAKSRPKGTA) are disordered.

This sequence belongs to the XPG/RAD2 endonuclease family. FEN1 subfamily. In terms of assembly, interacts with PCNA. Three molecules of FEN1 bind to one PCNA trimer with each molecule binding to one PCNA monomer. PCNA stimulates the nuclease activity without altering cleavage specificity. It depends on Mg(2+) as a cofactor. In terms of processing, phosphorylated. Phosphorylation upon DNA damage induces relocalization to the nuclear plasma.

The protein resides in the nucleus. Its subcellular location is the nucleolus. It is found in the nucleoplasm. It localises to the mitochondrion. Functionally, structure-specific nuclease with 5'-flap endonuclease and 5'-3' exonuclease activities involved in DNA replication and repair. During DNA replication, cleaves the 5'-overhanging flap structure that is generated by displacement synthesis when DNA polymerase encounters the 5'-end of a downstream Okazaki fragment. It enters the flap from the 5'-end and then tracks to cleave the flap base, leaving a nick for ligation. Also involved in the long patch base excision repair (LP-BER) pathway, by cleaving within the apurinic/apyrimidinic (AP) site-terminated flap. Acts as a genome stabilization factor that prevents flaps from equilibrating into structures that lead to duplications and deletions. Also possesses 5'-3' exonuclease activity on nicked or gapped double-stranded DNA, and exhibits RNase H activity. Also involved in replication and repair of rDNA and in repairing mitochondrial DNA. The sequence is that of Flap endonuclease 1 from Uncinocarpus reesii (strain UAMH 1704).